The chain runs to 60 residues: Cytotoxin 5 (60 aa).

Intrachain disulfides connect C3-C21, C14-C38, C42-C53, and C54-C59.

The protein belongs to the three-finger toxin family. Short-chain subfamily. Type IA cytotoxin sub-subfamily. In terms of assembly, monomer in solution; Homodimer and oligomer in the presence of negatively charged lipids forming a pore with a size ranging between 20 and 30 Angstroms. In terms of tissue distribution, expressed by the venom gland.

The protein localises to the secreted. It localises to the target cell membrane. Shows cytolytic activity on many different cells by forming pore in lipid membranes. In vivo, increases heart rate or kills the animal by cardiac arrest. In addition, it binds to heparin with high affinity, interacts with Kv channel-interacting protein 1 (KCNIP1) in a calcium-independent manner, and binds to integrin alpha-V/beta-3 (ITGAV/ITGB3) with moderate affinity. This is Cytotoxin 5 from Naja annulifera (Banded Egyptian cobra).